The sequence spans 102 residues: Small ribosomal subunit protein uS10 (102 aa).

Belongs to the universal ribosomal protein uS10 family. In terms of assembly, part of the 30S ribosomal subunit.

Involved in the binding of tRNA to the ribosomes. This Phenylobacterium zucineum (strain HLK1) protein is Small ribosomal subunit protein uS10.